Here is an 89-residue protein sequence, read N- to C-terminus: Large ribosomal subunit protein bL27 (89 aa).

The disordered stretch occupies residues 1 to 21; that stretch reads MAHKKAGGSSRNGRDSKGKRL.

This sequence belongs to the bacterial ribosomal protein bL27 family.

In Bradyrhizobium sp. (strain ORS 278), this protein is Large ribosomal subunit protein bL27.